The chain runs to 63 residues: Large ribosomal subunit protein bL28 (63 aa).

This sequence belongs to the bacterial ribosomal protein bL28 family.

The chain is Large ribosomal subunit protein bL28 from Syntrophotalea carbinolica (strain DSM 2380 / NBRC 103641 / GraBd1) (Pelobacter carbinolicus).